Here is a 321-residue protein sequence, read N- to C-terminus: Lipoyl synthase (321 aa).

Residues Cys-68, Cys-73, Cys-79, Cys-94, Cys-98, Cys-101, and Ser-308 each coordinate [4Fe-4S] cluster. The Radical SAM core domain maps to 80 to 297; sequence FNHGTATFMI…KEIALELGFT (218 aa).

It belongs to the radical SAM superfamily. Lipoyl synthase family. [4Fe-4S] cluster serves as cofactor.

The protein resides in the cytoplasm. The catalysed reaction is [[Fe-S] cluster scaffold protein carrying a second [4Fe-4S](2+) cluster] + N(6)-octanoyl-L-lysyl-[protein] + 2 oxidized [2Fe-2S]-[ferredoxin] + 2 S-adenosyl-L-methionine + 4 H(+) = [[Fe-S] cluster scaffold protein] + N(6)-[(R)-dihydrolipoyl]-L-lysyl-[protein] + 4 Fe(3+) + 2 hydrogen sulfide + 2 5'-deoxyadenosine + 2 L-methionine + 2 reduced [2Fe-2S]-[ferredoxin]. The protein operates within protein modification; protein lipoylation via endogenous pathway; protein N(6)-(lipoyl)lysine from octanoyl-[acyl-carrier-protein]: step 2/2. In terms of biological role, catalyzes the radical-mediated insertion of two sulfur atoms into the C-6 and C-8 positions of the octanoyl moiety bound to the lipoyl domains of lipoate-dependent enzymes, thereby converting the octanoylated domains into lipoylated derivatives. This is Lipoyl synthase from Vibrio campbellii (strain ATCC BAA-1116).